The chain runs to 235 residues: Hydroxyacylglutathione hydrolase (235 aa).

Zn(2+) contacts are provided by His53, His55, Asp57, His58, His109, Asp127, and His165.

The protein belongs to the metallo-beta-lactamase superfamily. Glyoxalase II family. Monomer. Requires Zn(2+) as cofactor.

The catalysed reaction is an S-(2-hydroxyacyl)glutathione + H2O = a 2-hydroxy carboxylate + glutathione + H(+). Its pathway is secondary metabolite metabolism; methylglyoxal degradation; (R)-lactate from methylglyoxal: step 2/2. Functionally, thiolesterase that catalyzes the hydrolysis of S-D-lactoyl-glutathione to form glutathione and D-lactic acid. The chain is Hydroxyacylglutathione hydrolase from Actinobacillus pleuropneumoniae serotype 5b (strain L20).